A 484-amino-acid chain; its full sequence is Phosphoenolpyruvate carboxylase (484 aa).

It belongs to the PEPCase type 2 family. As to quaternary structure, homotetramer. Mg(2+) serves as cofactor.

The catalysed reaction is oxaloacetate + phosphate = phosphoenolpyruvate + hydrogencarbonate. Its function is as follows. Catalyzes the irreversible beta-carboxylation of phosphoenolpyruvate (PEP) to form oxaloacetate (OAA), a four-carbon dicarboxylic acid source for the tricarboxylic acid cycle. This is Phosphoenolpyruvate carboxylase from Methanospirillum hungatei JF-1 (strain ATCC 27890 / DSM 864 / NBRC 100397 / JF-1).